Here is a 153-residue protein sequence, read N- to C-terminus: Transcriptional repressor NrdR (153 aa).

A zinc finger spans residues 3-34; the sequence is CPFCGYEDTRVLDSRELSEGRAIRRRRECPQC. The region spanning 49–139 is the ATP-cone domain; the sequence is ITVIKKDGRR…VYKDFREIDQ (91 aa).

It belongs to the NrdR family. Requires Zn(2+) as cofactor.

Its function is as follows. Negatively regulates transcription of bacterial ribonucleotide reductase nrd genes and operons by binding to NrdR-boxes. This chain is Transcriptional repressor NrdR, found in Fervidobacterium nodosum (strain ATCC 35602 / DSM 5306 / Rt17-B1).